The primary structure comprises 434 residues: GTPase Obg (434 aa).

Residues 1–158 form the Obg domain; that stretch reads MFIDRAKIYV…RWLYLELKLL (158 aa). The OBG-type G domain occupies 159 to 328; sequence ADVGLLGLPN…LLELMEKYVK (170 aa). GTP-binding positions include 165-172, 190-194, 211-214, 280-283, and 309-311; these read GLPNAGKS, FTTKT, DIPG, NKID, and SAK. Residues S172 and T192 each contribute to the Mg(2+) site. The region spanning 347–425 is the OCT domain; sequence KQENKKQEIP…IGNYVFKYNS (79 aa).

This sequence belongs to the TRAFAC class OBG-HflX-like GTPase superfamily. OBG GTPase family. In terms of assembly, monomer. It depends on Mg(2+) as a cofactor.

Its subcellular location is the cytoplasm. In terms of biological role, an essential GTPase which binds GTP, GDP and possibly (p)ppGpp with moderate affinity, with high nucleotide exchange rates and a fairly low GTP hydrolysis rate. Plays a role in control of the cell cycle, stress response, ribosome biogenesis and in those bacteria that undergo differentiation, in morphogenesis control. This Dictyoglomus turgidum (strain DSM 6724 / Z-1310) protein is GTPase Obg.